A 309-amino-acid polypeptide reads, in one-letter code: Porphobilinogen deaminase (309 aa).

Cysteine 241 carries the post-translational modification S-(dipyrrolylmethanemethyl)cysteine.

Belongs to the HMBS family. Monomer. Requires dipyrromethane as cofactor.

The catalysed reaction is 4 porphobilinogen + H2O = hydroxymethylbilane + 4 NH4(+). Its pathway is porphyrin-containing compound metabolism; protoporphyrin-IX biosynthesis; coproporphyrinogen-III from 5-aminolevulinate: step 2/4. Tetrapolymerization of the monopyrrole PBG into the hydroxymethylbilane pre-uroporphyrinogen in several discrete steps. The protein is Porphobilinogen deaminase of Bacillus cereus (strain ATCC 10987 / NRS 248).